The chain runs to 778 residues: High affinity nerve growth factor receptor (778 aa).

An N-terminal signal peptide occupies residues 1–14 (WGCLRLPLPLCHAL). Residues 15 to 400 (AAHCRCPASH…VETADEHTFG (386 aa)) are Extracellular-facing. The cysteines at positions 18 and 20 are disulfide-linked. 2 LRR repeats span residues 71–92 (DLRH…AFQD) and 95–116 (RLSH…TFQH). 11 N-linked (GlcNAc...) asparagine glycosylation sites follow: asparagine 100, asparagine 130, asparagine 143, asparagine 151, asparagine 194, asparagine 234, asparagine 262, asparagine 300, asparagine 320, asparagine 340, and asparagine 384. In terms of domain architecture, LRRCT spans 127–175 (NPFNCSCGIRWLQLWQNGSRAELGNQSLLCWEGSMLVALDSHPLHDCEP). Cysteine 133 and cysteine 173 are joined by a disulfide. Ig-like C2-type domains follow at residues 175 to 262 (PPTA…VMLN) and 281 to 347 (WCIP…VVQN). Cysteine 282 and cysteine 327 are joined by a disulfide. The chain crosses the membrane as a helical span at residues 401–421 (VSVAVALAVFASLFLSVMLIA). Residues 422–778 (LNKCGHRSKF…TPPIYLDILG (357 aa)) lie on the Cytoplasmic side of the membrane. Tyrosine 479 carries the phosphotyrosine; by autocatalysis modification. The region spanning 493 to 763 (IVLKWELGEG…RSIQDIHSRL (271 aa)) is the Protein kinase domain. ATP is bound by residues 499–507 (LGEGAFGKV) and lysine 527. Aspartate 633 functions as the Proton acceptor in the catalytic mechanism. Phosphotyrosine; by autocatalysis occurs at positions 659, 663, 664, and 773.

This sequence belongs to the protein kinase superfamily. Tyr protein kinase family. Insulin receptor subfamily. In terms of assembly, exists in a dynamic equilibrium between monomeric (low affinity) and dimeric (high affinity) structures. Homodimerization is induced by NGF dimer binding. Interacts with PTPRS. Ligand-mediated auto-phosphorylation. In terms of processing, ubiquitinated. Undergoes polyubiquitination upon activation; regulated by NGFR. Ubiquitination regulates the internalization of the receptor.

The protein resides in the cell membrane. It is found in the early endosome membrane. Its subcellular location is the late endosome membrane. It localises to the recycling endosome membrane. It carries out the reaction L-tyrosyl-[protein] + ATP = O-phospho-L-tyrosyl-[protein] + ADP + H(+). The pro-survival signaling effect of NTRK1 in neurons requires its endocytosis into signaling early endosomes and its retrograde axonal transport. Receptor tyrosine kinase involved in the development and the maturation of the central and peripheral nervous systems through regulation of proliferation, differentiation and survival of sympathetic and nervous neurons. High affinity receptor for NGF which is its primary ligand, it can also bind and be activated by NTF3/neurotrophin-3. Upon dimeric NGF ligand-binding, undergoes homodimerization, autophosphorylation and activation. Recruits, phosphorylates and/or activates several downstream effectors that regulate distinct overlapping signaling cascades driving cell survival and differentiation. In absence of ligand and activation, may promote cell death, making the survival of neurons dependent on trophic factors. This Gallus gallus (Chicken) protein is High affinity nerve growth factor receptor (NTRK1).